Here is a 325-residue protein sequence, read N- to C-terminus: MTDVSRKIRAWGRRLMIGTAAAVVLPGLVGLAGGAATAGAFSRPGLPVEYLQVPSPSMGRDIKVQFQSGGNNSPAVYLLDGLRAQDDYNGWDINTPAFEWYYQSGLSIVMPVGGQSSFYSDWYSPACGKAGCQTYKWETLLTSELPQWLSANRAVKPTGSAAIGLSMAGSSAMILAAYHPQQFIYAGSLSALLDPSQGMGPSLIGLAMGDAGGYKAADMWGPSSDPAWERNDPTQQIPKLVANNTRLWVYCGNGTPNELGGANIPAEFLENFVRSSNLKFQDAYNAAGGHNAVFNFPPNGTHSWEYWGAQLNAMKGDLQSSLGAG.

Residues 1-40 (MTDVSRKIRAWGRRLMIGTAAAVVLPGLVGLAGGAATAGA) form the signal peptide. 82-83 (LR) serves as a coordination point for substrate. Positions 98 to 108 (FEWYYQSGLSI) are fibronectin-binding. The cysteines at positions 127 and 132 are disulfide-linked. Ser-166 and Asp-194 together coordinate substrate. Ser-166 functions as the Nucleophile in the catalytic mechanism. Residue Glu-270 is part of the active site. Substrate contacts are provided by residues 272 to 275 (FVRS), Lys-279, and 302 to 304 (HSW). Residue His-302 is part of the active site.

The protein belongs to the mycobacterial A85 antigen family.

It is found in the secreted. The catalysed reaction is 2 alpha,alpha'-trehalose 6-mycolate = alpha,alpha'-trehalose 6,6'-bismycolate + alpha,alpha-trehalose. It carries out the reaction an acyl-CoA + a 1,2-diacyl-sn-glycerol = a triacyl-sn-glycerol + CoA. Functionally, the antigen 85 proteins (FbpA, FbpB, FbpC) are responsible for the high affinity of mycobacteria for fibronectin, a large adhesive glycoprotein, which facilitates the attachment of Mycobacteria to murine alveolar macrophages (AMs). They also help to maintain the integrity of the cell wall by catalyzing the transfer of mycolic acids to cell wall arabinogalactan and through the synthesis of alpha,alpha-trehalose dimycolate (TDM, cord factor). They catalyze the transfer of a mycoloyl residue from one molecule of alpha,alpha-trehalose monomycolate (TMM) to another TMM, leading to the formation of TDM. This chain is Diacylglycerol acyltransferase/mycolyltransferase Ag85B (fbpB), found in Mycobacterium bovis (strain BCG / Pasteur 1173P2).